The sequence spans 999 residues: Hypoxia up-regulated protein 1 (999 aa).

The first 32 residues, Met-1–Thr-32, serve as a signal peptide directing secretion. N-linked (GlcNAc...) asparagine glycans are attached at residues Asn-155, Asn-222, and Asn-515. Positions Val-564–Lys-694 are disordered. Phosphoserine is present on Ser-567. Residues Leu-574–Ser-583 are compositionally biased toward polar residues. Residue Asn-596 is glycosylated (N-linked (GlcNAc...) asparagine). Basic and acidic residues-rich tracts occupy residues Gly-611–Ala-626 and Pro-641–Glu-668. Residues Asn-830, Asn-862, and Asn-869 are each glycosylated (N-linked (GlcNAc...) asparagine). An N6-acetyllysine modification is found at Lys-883. The interval Ala-909–Leu-999 is disordered. 2 N-linked (GlcNAc...) asparagine glycosylation sites follow: Asn-922 and Asn-931. Basic and acidic residues predominate over residues Glu-949–Leu-962. The Prevents secretion from ER motif lies at Asn-996 to Leu-999.

This sequence belongs to the heat shock protein 70 family. As to quaternary structure, part of a large chaperone multiprotein complex comprising DNAJB11, HSP90B1, HSPA5, HYOU, PDIA2, PDIA4, PDIA6, PPIB, SDF2L1, UGGT1 and very small amounts of ERP29, but not, or at very low levels, CALR nor CANX. As to expression, selectively expressed by cultured astrocytes but not endothelial cells, microglia or neurons.

Its subcellular location is the endoplasmic reticulum lumen. Functionally, has a pivotal role in cytoprotective cellular mechanisms triggered by oxygen deprivation. Promotes HSPA5/BiP-mediated ATP nucleotide exchange and thereby activates the unfolded protein response (UPR) pathway in the presence of endoplasmic reticulum stress. May play a role as a molecular chaperone and participate in protein folding. In Rattus norvegicus (Rat), this protein is Hypoxia up-regulated protein 1 (Hyou1).